The following is a 799-amino-acid chain: Cadherin-8 (799 aa).

A signal peptide spans 1–29 (MPERLAETLMDLWTPLIILWITLPSCVYT). Residues 30-61 (APMNQAHVLTTGSPLELSRQSEDMRILSRSKR) constitute a propeptide that is removed on maturation. 5 Cadherin domains span residues 62–167 (GWVW…APEF), 168–276 (LNGP…PPKF), 277–391 (AQSL…PPVF), 392–494 (SSPT…DNAP), and 495–616 (EFAS…YVLP). Residues 62 to 621 (GWVWNQMFVL…AYVLPIGLSM (560 aa)) lie on the Extracellular side of the membrane. A glycan (N-linked (GlcNAc...) asparagine) is linked at N188. 3 N-linked (GlcNAc...) asparagine glycosylation sites follow: N463, N473, and N544. The helical transmembrane segment at 622 to 642 (GALIAILACIILLLVIVVLFV) threads the bilayer. Over 643-799 (TLRRHKNEPL…YSVGESDKET (157 aa)) the chain is Cytoplasmic. S795 carries the post-translational modification Phosphoserine.

The protein localises to the cell membrane. Functionally, cadherins are calcium-dependent cell adhesion proteins. They preferentially interact with themselves in a homophilic manner in connecting cells; cadherins may thus contribute to the sorting of heterogeneous cell types. This Mus musculus (Mouse) protein is Cadherin-8 (Cdh8).